Reading from the N-terminus, the 219-residue chain is Phosphatidylserine decarboxylase proenzyme (219 aa).

The active-site Schiff-base intermediate with substrate; via pyruvic acid is serine 188. Pyruvic acid (Ser); by autocatalysis is present on serine 188.

This sequence belongs to the phosphatidylserine decarboxylase family. PSD-A subfamily. In terms of assembly, heterodimer of a large membrane-associated beta subunit and a small pyruvoyl-containing alpha subunit. Pyruvate is required as a cofactor. Is synthesized initially as an inactive proenzyme. Formation of the active enzyme involves a self-maturation process in which the active site pyruvoyl group is generated from an internal serine residue via an autocatalytic post-translational modification. Two non-identical subunits are generated from the proenzyme in this reaction, and the pyruvate is formed at the N-terminus of the alpha chain, which is derived from the carboxyl end of the proenzyme. The post-translation cleavage follows an unusual pathway, termed non-hydrolytic serinolysis, in which the side chain hydroxyl group of the serine supplies its oxygen atom to form the C-terminus of the beta chain, while the remainder of the serine residue undergoes an oxidative deamination to produce ammonia and the pyruvoyl prosthetic group on the alpha chain.

The protein resides in the cell membrane. It catalyses the reaction a 1,2-diacyl-sn-glycero-3-phospho-L-serine + H(+) = a 1,2-diacyl-sn-glycero-3-phosphoethanolamine + CO2. It functions in the pathway phospholipid metabolism; phosphatidylethanolamine biosynthesis; phosphatidylethanolamine from CDP-diacylglycerol: step 2/2. In terms of biological role, catalyzes the formation of phosphatidylethanolamine (PtdEtn) from phosphatidylserine (PtdSer). The polypeptide is Phosphatidylserine decarboxylase proenzyme (Geobacter sp. (strain M21)).